The sequence spans 249 residues: Phosphoadenosine 5'-phosphosulfate reductase (249 aa).

The active-site Nucleophile; cysteine thiosulfonate intermediate is the cysteine 230.

Belongs to the PAPS reductase family. CysH subfamily.

It localises to the cytoplasm. It catalyses the reaction [thioredoxin]-disulfide + sulfite + adenosine 3',5'-bisphosphate + 2 H(+) = [thioredoxin]-dithiol + 3'-phosphoadenylyl sulfate. Its pathway is sulfur metabolism; hydrogen sulfide biosynthesis; sulfite from sulfate: step 3/3. Catalyzes the formation of sulfite from phosphoadenosine 5'-phosphosulfate (PAPS) using thioredoxin as an electron donor. The polypeptide is Phosphoadenosine 5'-phosphosulfate reductase (Synechocystis sp. (strain ATCC 27184 / PCC 6803 / Kazusa)).